Reading from the N-terminus, the 438-residue chain is MPFRIAFLKQPFEDFFKHQASGGIVLLGATVLALVLANSPWSGQYFHFWEIKLTIGFDHFGLTQTLHHWINDGLMAVFFFLVGLELKREFMDGELASFRQAMLPIAAAFGGMLVPALIFHFINPMVPEAKGWGIPMATDIAFALGVLALLRGKISRSLAIFLTALAIVDDLGAVLVIALFYSGELAVGKLLVALVLLLILIAGNRLGVQSLNFYGLLGFCLWVVLLKSGLHASIAGVLIGMVIPARPRLCHEEFVDQTEKYMARYKEIGEVPGPFHHEERLGALLALEHICHDAMSSLQRMEHELHHWVIFGVIPIFALANAGLVLQLGNLVTAVTHPVTLGVALGLLLGKPLGILFFSWISVRVGLCALPRGTSWMDVFGVGILGGIGFTMSLFISNLAFMNIVMSNNAKLGIFIASMLAGAAGFTVLSRASARKAH.

11 helical membrane-spanning segments follow: residues 21–41 (SGGIVLLGATVLALVLANSPW), 66–86 (LHHWINDGLMAVFFFLVGLEL), 102–122 (MLPIAAAFGGMLVPALIFHFI), 130–150 (KGWGIPMATDIAFALGVLALL), 160–180 (IFLTALAIVDDLGAVLVIALF), 183–203 (GELAVGKLLVALVLLLILIAG), 206–226 (LGVQSLNFYGLLGFCLWVVLL), 308–328 (WVIFGVIPIFALANAGLVLQL), 341–361 (LGVALGLLLGKPLGILFFSWI), 376–396 (WMDVFGVGILGGIGFTMSLFI), and 410–430 (AKLGIFIASMLAGAAGFTVLS).

The protein belongs to the NhaA Na(+)/H(+) (TC 2.A.33) antiporter family.

The protein localises to the cell inner membrane. It carries out the reaction Na(+)(in) + 2 H(+)(out) = Na(+)(out) + 2 H(+)(in). Na(+)/H(+) antiporter that extrudes sodium in exchange for external protons. This Syntrophotalea carbinolica (strain DSM 2380 / NBRC 103641 / GraBd1) (Pelobacter carbinolicus) protein is Na(+)/H(+) antiporter NhaA 2.